The sequence spans 214 residues: Large ribosomal subunit protein uL3 (214 aa).

Q155 is subject to N5-methylglutamine.

The protein belongs to the universal ribosomal protein uL3 family. In terms of assembly, part of the 50S ribosomal subunit. Forms a cluster with proteins L14 and L19. Methylated by PrmB.

One of the primary rRNA binding proteins, it binds directly near the 3'-end of the 23S rRNA, where it nucleates assembly of the 50S subunit. The sequence is that of Large ribosomal subunit protein uL3 from Acinetobacter baumannii (strain ACICU).